The sequence spans 422 residues: MSSSSSLSSSTTTATTTSARIRLPSISELTSRSTISGGSNNGNGSALKSQISPRLSDTSRILPSILKNTSGSSTPTSSSTPFKCPPIKSTVGGTLSSGNTQSNYVLGNTKINSLPRLSSPTLPVKVQPQQQPQLPPASSLSPVTRVINTPPQQPQSVSASTSPNTQYQYYQYQQQSSPIQQQQQQQQATPAATPTVMQMAQNQPSHPAPLQYATQQYYPQPVYYQSPAGVPPPPPSVTHQGHIIAVHQHPGHLPQVGVNGMPPNVGYTIVQPEIVNKSTNRCHRCGTTETPEWRRGPKGVRTLCNACGLFHAKLVKRKGAALAAEEVLNNKVTKGKNGRRISMKKHLLNESLKQQQQINGVGIPINGFNHQILPPSFKPQQGGIATLPPLMHGQYPNNVNNLVIHQPPPQQQQQQQQHNNIC.

Composition is skewed to low complexity over residues 1-19 (MSSS…TTSA) and 36-45 (SGGSNNGNGS). 2 disordered regions span residues 1–86 (MSSS…KCPP) and 116–207 (RLSS…PSHP). Residues 46 to 61 (ALKSQISPRLSDTSRI) are compositionally biased toward polar residues. Low complexity-rich tracts occupy residues 69-81 (TSGS…SSTP) and 120-143 (PTLP…LSPV). Residues 146–159 (VINTPPQQPQSVSA) show a composition bias toward polar residues. Low complexity predominate over residues 160 to 194 (STSPNTQYQYYQYQQQSSPIQQQQQQQQATPAATP). Residues 195 to 205 (TVMQMAQNQPS) are compositionally biased toward polar residues. A GATA-type zinc finger spans residues 282-307 (CHRCGTTETPEWRRGPKGVRTLCNAC).

In terms of assembly, interacts with HDA1.

It is found in the nucleus. Transcription factor required for hyphal growth, biofilm formation, and virulence. Promotes formation of both conventional and pheromone-stimulated biofilms. Binds and recruits HDA1 to promoters of hypha-specific genes in a rapamycin-dependent manner. Involved in the switch between two heritable states, the white and opaque states. These two cell types differ in many characteristics, including cell structure, mating competence, and virulence. Each state is heritable for many generations, and switching between states occurs stochastically at low frequency. The protein is Biofilm regulator 1 (BRG1) of Candida albicans (strain SC5314 / ATCC MYA-2876) (Yeast).